The following is a 244-amino-acid chain: tRNA (guanine-N(1)-)-methyltransferase (244 aa).

S-adenosyl-L-methionine contacts are provided by residues Gly120 and 140 to 145; that span reads IGDYIL.

The protein belongs to the RNA methyltransferase TrmD family. Homodimer.

The protein localises to the cytoplasm. It carries out the reaction guanosine(37) in tRNA + S-adenosyl-L-methionine = N(1)-methylguanosine(37) in tRNA + S-adenosyl-L-homocysteine + H(+). Its function is as follows. Specifically methylates guanosine-37 in various tRNAs. This Brucella canis (strain ATCC 23365 / NCTC 10854 / RM-666) protein is tRNA (guanine-N(1)-)-methyltransferase.